The primary structure comprises 312 residues: Olfactory receptor 6Z7 (312 aa).

The Extracellular portion of the chain corresponds to methionine 1–aspartate 29. Asparagine 9 is a glycosylation site (N-linked (GlcNAc...) asparagine). Residues alanine 30–isoleucine 50 form a helical membrane-spanning segment. Residues tyrosine 51–asparagine 69 are Cytoplasmic-facing. Residues leucine 70 to tryptophan 90 traverse the membrane as a helical segment. A topological domain (extracellular) is located at residue asparagine 91. The helical transmembrane segment at glycine 92–valine 112 threads the bilayer. Cysteines 101 and 193 form a disulfide. Residues glycine 113–arginine 141 lie on the Cytoplasmic side of the membrane. A helical membrane pass occupies residues proline 142–isoleucine 162. At lysine 163–histidine 195 the chain is on the extracellular side. The N-linked (GlcNAc...) asparagine glycan is linked to asparagine 190. Residues valine 196–leucine 216 form a helical membrane-spanning segment. Over threonine 217 to alanine 241 the chain is Cytoplasmic. Residues phenylalanine 242 to isoleucine 262 form a helical membrane-spanning segment. Topologically, residues tyrosine 263–asparagine 275 are extracellular. Residues lysine 276 to leucine 296 form a helical membrane-spanning segment. The Cytoplasmic segment spans residues arginine 297–serine 312.

This sequence belongs to the G-protein coupled receptor 1 family.

Its subcellular location is the cell membrane. Functionally, odorant receptor. The polypeptide is Olfactory receptor 6Z7 (Mus musculus (Mouse)).